The primary structure comprises 74 residues: Antimicrobial peptide HsAp2 (74 aa).

Positions 1-21 are cleaved as a signal peptide; it reads MSRRLILILVLVAMLVKTMAG. A propeptide spanning residues 22 to 33 is cleaved from the precursor; that stretch reads MESKWVETTYEI. Proline 65 is modified (proline amide). The propeptide occupies 69 to 74; the sequence is AISEQT.

It belongs to the non-disulfide-bridged peptide (NDBP) superfamily. Medium-length antimicrobial peptide (group 3) family. In terms of tissue distribution, expressed by the venom gland.

The protein resides in the secreted. Its subcellular location is the target cell membrane. Functionally, possesses antimicrobial activity against both Gram-negative and Gram-positive bacteria, as well as against the fungus C.tropicalis. Also possesses a relatively high hemolytic activity. May act by disrupting the integrity of the bacterial cell membrane. This is Antimicrobial peptide HsAp2 from Heterometrus spinifer (Asia giant forest scorpion).